An 833-amino-acid polypeptide reads, in one-letter code: Zinc transporter ZIP10 (833 aa).

The first 25 residues, 1–25 (MKVHIHTKFCLICLLTFIFHHCNHC), serve as a signal peptide directing secretion. The span at 30–48 (DHGPEELHRHHRGMTESES) shows a compositional bias: basic and acidic residues. Disordered stretches follow at residues 30-54 (DHGPEELHRHHRGMTESESSKFSVQ) and 137-167 (AENHTTTSVTSKRNHKCDPEKEAAELPIKAD). The segment covering 137–147 (AENHTTTSVTS) has biased composition (polar residues). The span at 152-167 (KCDPEKEAAELPIKAD) shows a compositional bias: basic and acidic residues. N-linked (GlcNAc...) asparagine glycans are attached at residues N191 and N198. Over residues 200-209 (SVAHSEHGEP) the composition is skewed to basic and acidic residues. Disordered regions lie at residues 200–257 (SVAH…NHDH) and 271–335 (RVHS…EDDR). The N-linked (GlcNAc...) asparagine glycan is linked to N218. Basic residues predominate over residues 229–241 (VKVRRKEKGKRKK). 2 stretches are compositionally biased toward basic and acidic residues: residues 281–315 (HLPEHSGHELGHGHQELDPDNEGELRHTRKREAPH) and 326–335 (SHKDQSEDDR). N341 carries an N-linked (GlcNAc...) asparagine glycan. 2 helical membrane-spanning segments follow: residues 413–433 (IISITVISLLSLLGVILVPII) and 440–460 (FLLTFLVALAVGTMSGDALLH). The interval 466 to 485 (QGGHDHSHQHTHGHGHSHGH) is disordered. The helical transmembrane segment at 497–517 (VLKGLVALGGIYLLFIIEHCI) threads the bilayer. A phosphothreonine mark is found at T538 and T555. S593 carries the post-translational modification Phosphoserine. 4 helical membrane passes run 689–709 (AIGAAFSAGLTGGISTSIAVF), 734–754 (IVYNLLSAMMAYIGMLIGTAV), 761–781 (ITLWIFAITAGMFLYVALVDM), and 803–823 (FILQNLGLLFGFAIMLVIALY).

The protein belongs to the ZIP transporter (TC 2.A.5) family. Interacts with SLC39A6. This interaction triggers cells to undergo EMT and mitosis. Found in a complex with SLC39A6, SLC39A10 and with the 'Ser-727' phosphorylated form of STAT3 throughout mitosis. Found in a complex with SLC39A6, SLC39A10 and with NCAM1; this complex controls NCAM1 phosphorylation and integration into focal adhesion complexes during epithelial-tomesenchymal transition. Found in a complex with SLC39A6, SLC39A10 and with GSK3B that controls NCAM1 phosphorylation. Post-translationally, undergoes N-terminal ectodomain shedding. In terms of tissue distribution, expressed in the liver, kidney and brain.

Its subcellular location is the cell membrane. It is found in the apical cell membrane. The enzyme catalyses Zn(2+)(in) = Zn(2+)(out). In terms of biological role, zinc-influx transporter. When associated with SLC39A6, the heterodimer formed by SLC39A10 and SLC39A6 mediates cellular zinc uptake to trigger cells to undergo epithelial-to-mesenchymal transition (EMT). mediates cellular zinc uptake to trigger cells to undergo epithelial-to-mesenchymal transition (EMT). SLC39A10-SLC39A6 heterodimers play also an essentiel role in initiating mitosis by importing zinc into cells to initiate a pathway resulting in the onset of mitosis. Plays an important for both mature B-cell maintenance and humoral immune responses. When associated with SLC39A10, the heterodimer controls NCAM1 phosphorylation and integration into focal adhesion complexes during EMT. In Mus musculus (Mouse), this protein is Zinc transporter ZIP10.